Here is a 344-residue protein sequence, read N- to C-terminus: UDP-N-acetylglucosamine transporter UGNT1 (344 aa).

The interval 1-23 is disordered; that stretch reads MRNNPVLPVSDPPLAGENDSDGK. 9 helical membrane passes run 41–61, 66–86, 92–112, 114–134, 167–187, 194–214, 226–246, 264–284, and 304–324; these read YAAL…KAAL, FPCV…FLYA, IISF…FVPV, TLFH…ASMA, YTRS…FAGA, FYGY…LATI, FGLM…WTFI, FMVV…CIFL, and FTVG…MNVI.

The protein belongs to the TPT transporter family. UGnT (TC 2.A.7.15) subfamily. As to expression, expressed in roots, leaves, stems, flowers and siliques.

Its subcellular location is the golgi apparatus membrane. In terms of biological role, mediates the transport of UDP-N-acetylglucosamine (UDP-GlcNAc) across the Golgi apparatus membrane. Delivers an essential substrate for the maturation of N-glycans and the GlcNAc-containing glycosyl inositol phosphorylceramide (GIPC) class of sphingolipids in the Golgi apparatus. This is UDP-N-acetylglucosamine transporter UGNT1 from Arabidopsis thaliana (Mouse-ear cress).